Consider the following 418-residue polypeptide: MNQFVIKGSNKLTGDVFISGSKNASLPILFATILSEEEIEIQNVPKIKDTDFAIKLLRYLGATVEENKSIYINAKNISIYHAPCNLVKTMRASIWALGPLLARFGEGSISLPGGCEIGNRPVDLHLYGLKKLGAKIYLKDGYVKANVKGRLHSARIVMNKISVGATLTIMSAATLAIGITIIENAAREPEIIDTANFLISLGAKINGVGTNTIFIKGVKKLKGGVYKILPDRIETGTFLVAAAISRGKITCYDTNPNTLNIVLKKLHESGARIEIGKDWIKLDMIDKRPKAVKIETSPYPGFPTDMQAQFTVLNLISYGSSIITENIFENRFMHISELIKMGGRAIIKNNNIFCYGVNQLFGAQVIAKDLRTAASLIIAGCIADGITTVDCLYHIDRGYCQIENKLKNIGANIKRLKK.

Phosphoenolpyruvate is bound at residue 22–23; the sequence is KN. Arginine 91 provides a ligand contact to UDP-N-acetyl-alpha-D-glucosamine. Catalysis depends on cysteine 115, which acts as the Proton donor. Cysteine 115 is modified (2-(S-cysteinyl)pyruvic acid O-phosphothioketal). UDP-N-acetyl-alpha-D-glucosamine-binding positions include 120–124, aspartate 305, and isoleucine 327; that span reads RPVDL.

The protein belongs to the EPSP synthase family. MurA subfamily.

It localises to the cytoplasm. It catalyses the reaction phosphoenolpyruvate + UDP-N-acetyl-alpha-D-glucosamine = UDP-N-acetyl-3-O-(1-carboxyvinyl)-alpha-D-glucosamine + phosphate. The protein operates within cell wall biogenesis; peptidoglycan biosynthesis. In terms of biological role, cell wall formation. Adds enolpyruvyl to UDP-N-acetylglucosamine. The polypeptide is UDP-N-acetylglucosamine 1-carboxyvinyltransferase (Wigglesworthia glossinidia brevipalpis).